The chain runs to 255 residues: tRNA (guanine-N(1)-)-methyltransferase (255 aa).

S-adenosyl-L-methionine is bound by residues Gly113 and 133–138 (IGDYVL).

The protein belongs to the RNA methyltransferase TrmD family. In terms of assembly, homodimer.

Its subcellular location is the cytoplasm. It catalyses the reaction guanosine(37) in tRNA + S-adenosyl-L-methionine = N(1)-methylguanosine(37) in tRNA + S-adenosyl-L-homocysteine + H(+). In terms of biological role, specifically methylates guanosine-37 in various tRNAs. This chain is tRNA (guanine-N(1)-)-methyltransferase, found in Klebsiella pneumoniae (strain 342).